The sequence spans 242 residues: Peroxisomal membrane protein 11-3 (242 aa).

Positions 1–22 are disordered; it reads MAAAAAAAGSSDSRKPAAHPPP. Residues 1–102 lie on the Cytoplasmic side of the membrane; sequence MAAAAAAAGS…LRAHPHPPPA (102 aa). A helical membrane pass occupies residues 103–123; it reads VALLAYGGEGVYYFLEQFVWL. Topologically, residues 124–214 are lumenal; sequence AKAGLLPAHL…MALGDVTDGK (91 aa). Residues 215–235 traverse the membrane as a helical segment; the sequence is GLLGSSTLMASAGLLSALISA. Residues 236–242 are Cytoplasmic-facing; the sequence is HKNWNSC.

It belongs to the peroxin-11 family. As to expression, expressed in seedlings, roots, leaf sheaths, spikelets and endosperm.

It localises to the peroxisome membrane. In terms of biological role, involved in peroxisomal proliferation. The sequence is that of Peroxisomal membrane protein 11-3 (PEX11-3) from Oryza sativa subsp. japonica (Rice).